Reading from the N-terminus, the 359-residue chain is Aminomethyltransferase (359 aa).

Belongs to the GcvT family. As to quaternary structure, the glycine cleavage system is composed of four proteins: P, T, L and H.

The catalysed reaction is N(6)-[(R)-S(8)-aminomethyldihydrolipoyl]-L-lysyl-[protein] + (6S)-5,6,7,8-tetrahydrofolate = N(6)-[(R)-dihydrolipoyl]-L-lysyl-[protein] + (6R)-5,10-methylene-5,6,7,8-tetrahydrofolate + NH4(+). Functionally, the glycine cleavage system catalyzes the degradation of glycine. The polypeptide is Aminomethyltransferase (Alcanivorax borkumensis (strain ATCC 700651 / DSM 11573 / NCIMB 13689 / SK2)).